Reading from the N-terminus, the 156-residue chain is D-aminoacyl-tRNA deacylase (156 aa).

The Gly-cisPro motif, important for rejection of L-amino acids signature appears at 139-140; sequence GP.

This sequence belongs to the DTD family. Homodimer.

The protein localises to the cytoplasm. It carries out the reaction glycyl-tRNA(Ala) + H2O = tRNA(Ala) + glycine + H(+). It catalyses the reaction a D-aminoacyl-tRNA + H2O = a tRNA + a D-alpha-amino acid + H(+). An aminoacyl-tRNA editing enzyme that deacylates mischarged D-aminoacyl-tRNAs. Also deacylates mischarged glycyl-tRNA(Ala), protecting cells against glycine mischarging by AlaRS. Acts via tRNA-based rather than protein-based catalysis; rejects L-amino acids rather than detecting D-amino acids in the active site. By recycling D-aminoacyl-tRNA to D-amino acids and free tRNA molecules, this enzyme counteracts the toxicity associated with the formation of D-aminoacyl-tRNA entities in vivo and helps enforce protein L-homochirality. This chain is D-aminoacyl-tRNA deacylase, found in Marinobacter nauticus (strain ATCC 700491 / DSM 11845 / VT8) (Marinobacter aquaeolei).